The primary structure comprises 398 residues: 1-deoxy-D-xylulose 5-phosphate reductoisomerase (398 aa).

Threonine 10, glycine 11, serine 12, valine 13, glycine 36, arginine 37, asparagine 38, and asparagine 124 together coordinate NADPH. Lysine 125 is a binding site for 1-deoxy-D-xylulose 5-phosphate. Glutamate 126 is a binding site for NADPH. Aspartate 150 serves as a coordination point for Mn(2+). 1-deoxy-D-xylulose 5-phosphate is bound by residues serine 151, glutamate 152, serine 186, and histidine 209. Glutamate 152 contacts Mn(2+). Glycine 215 is a binding site for NADPH. Residues serine 222, asparagine 227, lysine 228, and glutamate 231 each contribute to the 1-deoxy-D-xylulose 5-phosphate site. Glutamate 231 is a Mn(2+) binding site.

The protein belongs to the DXR family. As to quaternary structure, homodimer. The cofactor is Mg(2+). Mn(2+) serves as cofactor.

It carries out the reaction 2-C-methyl-D-erythritol 4-phosphate + NADP(+) = 1-deoxy-D-xylulose 5-phosphate + NADPH + H(+). The protein operates within isoprenoid biosynthesis; isopentenyl diphosphate biosynthesis via DXP pathway; isopentenyl diphosphate from 1-deoxy-D-xylulose 5-phosphate: step 1/6. In terms of biological role, catalyzes the NADPH-dependent rearrangement and reduction of 1-deoxy-D-xylulose-5-phosphate (DXP) to 2-C-methyl-D-erythritol 4-phosphate (MEP). The protein is 1-deoxy-D-xylulose 5-phosphate reductoisomerase of Serratia proteamaculans (strain 568).